Here is a 421-residue protein sequence, read N- to C-terminus: MPTLSVFMDVPLAHKLEGSLLKTYKQDDYPNKIFLAYRVCMTNEGHPWVSLVVQKTRLQISQDPSLNYEYLPTMGLKSFIQASLALLFGKHSQAIVENRVGGVHTVGDSGAFQLGVQFLRAWHKDARIVYIISSQKELHGLVFQDMGFTVYEYSVWDPKKLCMDPDILLNVVEQIPHGCVLVMGNIIDCKLTPSGWAKLMSMIKSKQIFPFFDIPCQGLYTSDLEEDTRILQYFVSQGFEFFCSQSLSKNFGIYDEGVGMLVVVAVNNQQLLCVLSQLEGLAQALWLNPPNTGARVITSILCNPALLGEWKQSLKEVVENIMLTKEKVKEKLQLLGTPGSWGHITEQSGTHGYLGLNSQQVEYLVRKKHIYIPKNGQINFSCINANNINYITEGINEAVLLTESSEMCLPKEKKTLIGIKL.

An N6-(pyridoxal phosphate)lysine modification is found at Lys249.

This sequence belongs to the class-I pyridoxal-phosphate-dependent aminotransferase family. In terms of assembly, homodimer. The cofactor is pyridoxal 5'-phosphate.

The protein localises to the cytoplasm. The catalysed reaction is L-aspartate + 2-oxoglutarate = oxaloacetate + L-glutamate. The polypeptide is Putative aspartate aminotransferase, cytoplasmic 2 (GOT1L1) (Homo sapiens (Human)).